The sequence spans 363 residues: Flagellar P-ring protein 2 (363 aa).

A signal peptide spans 1–18 (MLIRLLLLVICLAGPGVA).

The protein belongs to the FlgI family. In terms of assembly, the basal body constitutes a major portion of the flagellar organelle and consists of four rings (L,P,S, and M) mounted on a central rod.

Its subcellular location is the periplasm. The protein resides in the bacterial flagellum basal body. Assembles around the rod to form the L-ring and probably protects the motor/basal body from shearing forces during rotation. The sequence is that of Flagellar P-ring protein 2 from Cereibacter sphaeroides (strain ATCC 17023 / DSM 158 / JCM 6121 / CCUG 31486 / LMG 2827 / NBRC 12203 / NCIMB 8253 / ATH 2.4.1.) (Rhodobacter sphaeroides).